The chain runs to 334 residues: Catabolite repressor/activator (334 aa).

The 58-residue stretch at 1-58 folds into the HTH lacI-type domain; it reads MKLDEIARLAGVSRTTASYVINGKAKQYRVSDKTVEKVMAVVREHNYHPNAVAAGLRA. A DNA-binding region (H-T-H motif) is located at residues 3–22; that stretch reads LDEIARLAGVSRTTASYVIN.

As to quaternary structure, homotetramer.

In terms of biological role, global transcriptional regulator, which plays an important role in the regulation of carbon metabolism. This Escherichia coli O157:H7 protein is Catabolite repressor/activator (cra).